A 123-amino-acid polypeptide reads, in one-letter code: rRNA-processing protein cgr-1 (123 aa).

Low complexity predominate over residues Met-1 to Gln-13. Disordered regions lie at residues Met-1–Ser-47 and Glu-85–Ser-123. The stretch at Glu-49–Arg-110 forms a coiled coil. The segment covering Glu-85–Lys-102 has biased composition (basic and acidic residues). Basic residues predominate over residues Met-103 to Ser-123.

It belongs to the CGR1 family.

The protein localises to the nucleus. It is found in the nucleolus. Its function is as follows. Involved in nucleolar integrity and required for processing of the pre-rRNA for the 60S ribosome subunit. This chain is rRNA-processing protein cgr-1 (cgr-1), found in Neurospora crassa (strain ATCC 24698 / 74-OR23-1A / CBS 708.71 / DSM 1257 / FGSC 987).